A 383-amino-acid polypeptide reads, in one-letter code: Trichodiene synthase (383 aa).

This sequence belongs to the trichodiene synthase family.

It catalyses the reaction (2E,6E)-farnesyl diphosphate = trichodiene + diphosphate. It functions in the pathway sesquiterpene biosynthesis; trichothecene biosynthesis. In terms of biological role, TS is a member of the terpene cyclase group of enzymes. It catalyzes the isomerization and cyclization of farnesyl pyro-phosphate to form trichodiene, the first cyclic intermediate in the biosynthetic pathway for trichothecenes. It serves to branch trichothecene biosynthesis from the isoprenoid pathway. The polypeptide is Trichodiene synthase (TRI5) (Gibberella pulicaris).